The chain runs to 109 residues: N-cym protein (109 aa).

In terms of assembly, interacts with MYCN and GSK3B. Expressed in the neuronal cells of the cerebrum and cerebellum, spermatocytes of the testis, pancreatic cells and also the heart. Expressed in both primary and metastatic neuroblastomas and in thyroid tumors (at protein level). Expression is associated with poor prognosis in neuroblastoma. Expressed in the fetal brain, lung, liver and kidney at varying low levels.

The protein localises to the cytoplasm. It localises to the nucleus. Its function is as follows. Regulates stability of MYCN in neuroblastoma cells by inhibiting GSK3B-mediated MYCN phosphorylation. Inhibits GSK3B activity by promoting its phosphorylation at 'Ser-9'. This is N-cym protein (MYCNOS) from Homo sapiens (Human).